Reading from the N-terminus, the 278-residue chain is Large ribosomal subunit protein uL2 (278 aa).

The disordered stretch occupies residues 226–278; sequence MNPIDHPHGGGEGKTAAGRHPVSPWGTPSKGSRTRKNKRTSNMIVRSRYSKKG.

Belongs to the universal ribosomal protein uL2 family. In terms of assembly, part of the 50S ribosomal subunit. Forms a bridge to the 30S subunit in the 70S ribosome.

One of the primary rRNA binding proteins. Required for association of the 30S and 50S subunits to form the 70S ribosome, for tRNA binding and peptide bond formation. It has been suggested to have peptidyltransferase activity; this is somewhat controversial. Makes several contacts with the 16S rRNA in the 70S ribosome. The polypeptide is Large ribosomal subunit protein uL2 (Nitrosomonas europaea (strain ATCC 19718 / CIP 103999 / KCTC 2705 / NBRC 14298)).